The sequence spans 223 residues: Pre-mRNA-splicing factor SPF27 (223 aa).

Residues 139-223 (NENLLHMIDC…GENKENIEDY (85 aa)) adopt a coiled-coil conformation.

It belongs to the SPF27 family. Component of the pre-catalytic and catalytic spliceosome complexes. Component of the postcatalytic spliceosome P complex.

It is found in the nucleus. Required for pre-mRNA splicing as component of the activated spliceosome. May have a scaffolding role in the spliceosome assembly as it contacts all other components of the core complex. The chain is Pre-mRNA-splicing factor SPF27 (bcas2) from Xenopus tropicalis (Western clawed frog).